Reading from the N-terminus, the 255-residue chain is NADH dehydrogenase [ubiquinone] flavoprotein 2, mitochondrial (255 aa).

The N-terminal 35 residues, 1 to 35 (MLARLAAKRLLEIRQVFRQPTSQVTRSLSTALNYH), are a transit peptide targeting the mitochondrion. [2Fe-2S] cluster is bound by residues Cys130, Cys135, Cys171, and Cys175. Positions 214-255 (RKGEKPPHGTQNPKRIKCGPEGGNKTLLGEPKPPQFRDLDAC) are disordered.

This sequence belongs to the complex I 24 kDa subunit family. Complex I is composed of at least 49 different subunits. This is a component of the flavoprotein-sulfur (FP) fragment of the enzyme. The cofactor is [2Fe-2S] cluster.

The protein localises to the mitochondrion inner membrane. It catalyses the reaction a ubiquinone + NADH + 5 H(+)(in) = a ubiquinol + NAD(+) + 4 H(+)(out). In terms of biological role, core subunit of the mitochondrial membrane respiratory chain NADH dehydrogenase (Complex I) that is believed to belong to the minimal assembly required for catalysis. Complex I functions in the transfer of electrons from NADH to the respiratory chain. The immediate electron acceptor for the enzyme is believed to be ubiquinone. This is NADH dehydrogenase [ubiquinone] flavoprotein 2, mitochondrial from Arabidopsis thaliana (Mouse-ear cress).